A 360-amino-acid polypeptide reads, in one-letter code: Alkanal monooxygenase alpha chain (360 aa).

This sequence belongs to the bacterial luciferase oxidoreductase family. In terms of assembly, heterodimer of an alpha and a beta chain.

It catalyses the reaction a long-chain fatty aldehyde + FMNH2 + O2 = a long-chain fatty acid + hnu + FMN + H2O + 2 H(+). Its function is as follows. Light-emitting reaction in luminous bacteria. The polypeptide is Alkanal monooxygenase alpha chain (luxA) (Photorhabdus luminescens (Xenorhabdus luminescens)).